A 212-amino-acid polypeptide reads, in one-letter code: Pyridoxine/pyridoxamine 5'-phosphate oxidase (212 aa).

Substrate-binding positions include 8 to 11 and K66; that span reads RKNY. FMN contacts are provided by residues 61-66, 76-77, R82, K83, and Q105; these read RIVLIK and FT. Residues Y123, R127, and S131 each contribute to the substrate site. Residues 140–141 and W184 contribute to the FMN site; that span reads QS. Residue 190 to 192 coordinates substrate; sequence RLH. Residue R194 coordinates FMN.

The protein belongs to the pyridoxamine 5'-phosphate oxidase family. As to quaternary structure, homodimer. FMN is required as a cofactor.

It catalyses the reaction pyridoxamine 5'-phosphate + O2 + H2O = pyridoxal 5'-phosphate + H2O2 + NH4(+). The catalysed reaction is pyridoxine 5'-phosphate + O2 = pyridoxal 5'-phosphate + H2O2. The protein operates within cofactor metabolism; pyridoxal 5'-phosphate salvage; pyridoxal 5'-phosphate from pyridoxamine 5'-phosphate: step 1/1. Its pathway is cofactor metabolism; pyridoxal 5'-phosphate salvage; pyridoxal 5'-phosphate from pyridoxine 5'-phosphate: step 1/1. Catalyzes the oxidation of either pyridoxine 5'-phosphate (PNP) or pyridoxamine 5'-phosphate (PMP) into pyridoxal 5'-phosphate (PLP). The polypeptide is Pyridoxine/pyridoxamine 5'-phosphate oxidase (Paraburkholderia phymatum (strain DSM 17167 / CIP 108236 / LMG 21445 / STM815) (Burkholderia phymatum)).